A 61-amino-acid chain; its full sequence is Metallothionein-1A (61 aa).

Residue M1 is modified to N-acetylmethionine. Positions 1 to 29 (MDPNCSCPTGGSCSCAGSCTCKACRCTSC) are beta. A divalent metal cation-binding residues include C5, C7, C13, C15, C19, C21, C24, C26, C29, C33, C34, C36, C37, C41, C44, C48, C50, and C57. An alpha region spans residues 30–61 (KKSCCSCCPAGCARCAQGCICKGASDKCSCCA). Phosphoserine is present on S58. Residues C59 and C60 each contribute to the a divalent metal cation site.

It belongs to the metallothionein superfamily. Type 1 family. Monomer.

Functionally, metallothioneins have a high content of cysteine residues that bind various heavy metals; these proteins are transcriptionally regulated by both heavy metals and glucocorticoids. In Sus scrofa (Pig), this protein is Metallothionein-1A (MT1A).